The chain runs to 482 residues: Potential E3 ubiquitin-protein ligase ariadne-2 (482 aa).

The TRIAD supradomain stretch occupies residues 125–334; the sequence is AKGYCSVCAM…SEYYECSRYK (210 aa). Zn(2+)-binding residues include Cys129, Cys132, Cys145, His147, Cys150, Cys153, Cys172, Cys177, Cys218, Cys223, Cys239, Cys242, Cys247, Cys250, His255, Cys260, Cys287, and Cys290. The RING-type 1 zinc-finger motif lies at 129–177; sequence CSVCAMDGYTELPHLTCGHCFCEHCWKSHVESRLSEGVASRIECMESEC. An IBR-type zinc finger spans residues 198–260; sequence LKYERFLLRD…GADYHAPTSC (63 aa). The RING-type 2; atypical zinc-finger motif lies at 287–316; the sequence is CPQCHSCIEKAGGCNHIQCTRCRHHFCWMC. The active site involves Cys300. Zn(2+) is bound by residues Cys305, Cys308, Cys313, Cys316, His323, and Cys330. The stretch at 433-459 forms a coiled coil; that stretch reads FEYQQAQLEKEVEELAWAVERADGTAR.

It belongs to the RBR family. Ariadne subfamily.

The protein resides in the nucleus. It catalyses the reaction [E2 ubiquitin-conjugating enzyme]-S-ubiquitinyl-L-cysteine + [acceptor protein]-L-lysine = [E2 ubiquitin-conjugating enzyme]-L-cysteine + [acceptor protein]-N(6)-ubiquitinyl-L-lysine.. Functionally, might act as an E3 ubiquitin-protein ligase, or as part of E3 complex, which accepts ubiquitin from specific E2 ubiquitin-conjugating enzymes, such as UBC-2/UBE2L3, and then transfers it to substrates. This chain is Potential E3 ubiquitin-protein ligase ariadne-2, found in Caenorhabditis elegans.